An 86-amino-acid chain; its full sequence is Small ribosomal subunit protein uS17 (86 aa).

It belongs to the universal ribosomal protein uS17 family. Part of the 30S ribosomal subunit.

In terms of biological role, one of the primary rRNA binding proteins, it binds specifically to the 5'-end of 16S ribosomal RNA. This is Small ribosomal subunit protein uS17 from Bifidobacterium adolescentis (strain ATCC 15703 / DSM 20083 / NCTC 11814 / E194a).